The following is a 404-amino-acid chain: Cysteine desulfurase IscS (404 aa).

Pyridoxal 5'-phosphate contacts are provided by residues 75-76 (AT), Asn-155, Gln-183, and 203-205 (SGH). The residue at position 206 (Lys-206) is an N6-(pyridoxal phosphate)lysine. Thr-243 contacts pyridoxal 5'-phosphate. The active-site Cysteine persulfide intermediate is the Cys-328. Cys-328 serves as a coordination point for [2Fe-2S] cluster.

The protein belongs to the class-V pyridoxal-phosphate-dependent aminotransferase family. NifS/IscS subfamily. In terms of assembly, homodimer. Forms a heterotetramer with IscU, interacts with other sulfur acceptors. It depends on pyridoxal 5'-phosphate as a cofactor.

It is found in the cytoplasm. It catalyses the reaction (sulfur carrier)-H + L-cysteine = (sulfur carrier)-SH + L-alanine. Its pathway is cofactor biosynthesis; iron-sulfur cluster biosynthesis. In terms of biological role, master enzyme that delivers sulfur to a number of partners involved in Fe-S cluster assembly, tRNA modification or cofactor biosynthesis. Catalyzes the removal of elemental sulfur atoms from cysteine to produce alanine. Functions as a sulfur delivery protein for Fe-S cluster synthesis onto IscU, an Fe-S scaffold assembly protein, as well as other S acceptor proteins. This is Cysteine desulfurase IscS from Shewanella pealeana (strain ATCC 700345 / ANG-SQ1).